Consider the following 368-residue polypeptide: UPF0284 protein PCC8801_3324 (368 aa).

This sequence belongs to the UPF0284 family.

The polypeptide is UPF0284 protein PCC8801_3324 (Rippkaea orientalis (strain PCC 8801 / RF-1) (Cyanothece sp. (strain PCC 8801))).